A 77-amino-acid chain; its full sequence is uncharacterized protein (77 aa).

The 55-residue stretch at 11-65 folds into the HTH cro/C1-type domain; that stretch reads FARLRREKGLTQEEVEARSGFSQQYLSSLERGRRNPTVITLYELAQALGVSHVEL. Positions 22-41 form a DNA-binding region, H-T-H motif; it reads QEEVEARSGFSQQYLSSLER.

This is an uncharacterized protein from Sinorhizobium fredii (strain NBRC 101917 / NGR234).